A 351-amino-acid polypeptide reads, in one-letter code: Heme A synthase (351 aa).

Helical transmembrane passes span 17 to 37, 103 to 123, 129 to 149, 164 to 184, 201 to 221, 261 to 281, 289 to 309, and 316 to 336; these read WLIL…ATRL, LIGL…WLGQ, LVGL…MVSS, LMTH…LWLD, AMAL…VAGL, FNHR…AWAF, EFAF…LTLV, and LALV…YTVW. Residue His263 participates in heme binding. His320 lines the heme pocket.

Belongs to the COX15/CtaA family. Type 2 subfamily. In terms of assembly, interacts with CtaB. Heme b is required as a cofactor.

The protein localises to the cell membrane. The enzyme catalyses Fe(II)-heme o + 2 A + H2O = Fe(II)-heme a + 2 AH2. It participates in porphyrin-containing compound metabolism; heme A biosynthesis; heme A from heme O: step 1/1. In terms of biological role, catalyzes the conversion of heme O to heme A by two successive hydroxylations of the methyl group at C8. The first hydroxylation forms heme I, the second hydroxylation results in an unstable dihydroxymethyl group, which spontaneously dehydrates, resulting in the formyl group of heme A. The sequence is that of Heme A synthase from Hyphomonas neptunium (strain ATCC 15444).